The following is a 471-amino-acid chain: A-type ATP synthase subunit B (471 aa).

It belongs to the ATPase alpha/beta chains family. As to quaternary structure, has multiple subunits with at least A(3), B(3), C, D, E, F, H, I and proteolipid K(x).

It is found in the cell membrane. Its function is as follows. Component of the A-type ATP synthase that produces ATP from ADP in the presence of a proton gradient across the membrane. The B chain is a regulatory subunit. The sequence is that of A-type ATP synthase subunit B from Halobacterium salinarum (strain ATCC 29341 / DSM 671 / R1).